The following is a 423-amino-acid chain: Adenylosuccinate synthetase (423 aa).

GTP-binding positions include 12–18 and 40–42; these read GDEGKGK and GHT. Aspartate 13 functions as the Proton acceptor in the catalytic mechanism. Mg(2+) is bound by residues aspartate 13 and glycine 40. Residues 13–16, 38–41, threonine 129, arginine 143, glutamine 224, threonine 239, and arginine 303 contribute to the IMP site; these read DEGK and NAGH. Histidine 41 (proton donor) is an active-site residue. 299–305 lines the substrate pocket; sequence SVTGRQR. GTP-binding positions include arginine 305, 331 to 333, and 412 to 414; these read KGD and SVG.

It belongs to the adenylosuccinate synthetase family. In terms of assembly, homodimer. Requires Mg(2+) as cofactor.

The protein resides in the cytoplasm. The enzyme catalyses IMP + L-aspartate + GTP = N(6)-(1,2-dicarboxyethyl)-AMP + GDP + phosphate + 2 H(+). It functions in the pathway purine metabolism; AMP biosynthesis via de novo pathway; AMP from IMP: step 1/2. Functionally, plays an important role in the de novo pathway of purine nucleotide biosynthesis. Catalyzes the first committed step in the biosynthesis of AMP from IMP. The chain is Adenylosuccinate synthetase from Flavobacterium psychrophilum (strain ATCC 49511 / DSM 21280 / CIP 103535 / JIP02/86).